A 96-amino-acid chain; its full sequence is Antitoxin ParD4 (96 aa).

It belongs to the ParD antitoxin family.

Antitoxin component of a type II toxin-antitoxin (TA) system. Neutralizes the effect of cognate toxin ParE4, but no other RelE or ParE toxin. This chain is Antitoxin ParD4 (parD4), found in Caulobacter vibrioides (strain ATCC 19089 / CIP 103742 / CB 15) (Caulobacter crescentus).